Here is a 317-residue protein sequence, read N- to C-terminus: Acetyl-coenzyme A carboxylase carboxyl transferase subunit alpha (317 aa).

In terms of domain architecture, CoA carboxyltransferase C-terminal spans 40–293 (LEGRVRDAMM…GTVIADALKE (254 aa)).

This sequence belongs to the AccA family. As to quaternary structure, acetyl-CoA carboxylase is a heterohexamer composed of biotin carboxyl carrier protein (AccB), biotin carboxylase (AccC) and two subunits each of ACCase subunit alpha (AccA) and ACCase subunit beta (AccD).

The protein resides in the cytoplasm. The enzyme catalyses N(6)-carboxybiotinyl-L-lysyl-[protein] + acetyl-CoA = N(6)-biotinyl-L-lysyl-[protein] + malonyl-CoA. It functions in the pathway lipid metabolism; malonyl-CoA biosynthesis; malonyl-CoA from acetyl-CoA: step 1/1. Component of the acetyl coenzyme A carboxylase (ACC) complex. First, biotin carboxylase catalyzes the carboxylation of biotin on its carrier protein (BCCP) and then the CO(2) group is transferred by the carboxyltransferase to acetyl-CoA to form malonyl-CoA. The protein is Acetyl-coenzyme A carboxylase carboxyl transferase subunit alpha of Sinorhizobium fredii (strain NBRC 101917 / NGR234).